A 199-amino-acid polypeptide reads, in one-letter code: Pneumococcal vaccine antigen A homolog (199 aa).

Its subcellular location is the cell surface. The chain is Pneumococcal vaccine antigen A homolog (pvaA) from Streptococcus pyogenes serotype M3 (strain ATCC BAA-595 / MGAS315).